Reading from the N-terminus, the 1183-residue chain is PAN2-PAN3 deadenylation complex catalytic subunit PAN2 (1183 aa).

WD repeat units follow at residues 150 to 189 (SIENSSPVVKLAPLHRTVLAAGLSGQVTVLDPRTGFKAAQ) and 289 to 328 (DVSSYITSMALSSRGDYLAFGDGDGQLHVWTTNETGENAA). The tract at residues 331 to 478 (ENGSIVLPPF…EEIEEELNDG (148 aa)) is linker. The segment at 439 to 470 (AEGRARGKGRRDSGPRFRSEKDKKGTYKDKEE) is disordered. A compositionally biased stretch (basic and acidic residues) spans 448–469 (RRDSGPRFRSEKDKKGTYKDKE). The 386-residue stretch at 479 to 864 (EVPKYYRKVE…VPAVIILERE (386 aa)) folds into the USP domain. In terms of domain architecture, Exonuclease spans 916–1085 (VAIDAEFVAL…HDSIEDAHFA (170 aa)). Positions 919, 921, 1028, and 1081 each coordinate a divalent metal cation. The segment at 1155–1183 (KSRMATPPPPTKLGLPQWASQNSPSPLRR) is disordered. Residues 1172–1183 (WASQNSPSPLRR) are compositionally biased toward polar residues.

It belongs to the peptidase C19 family. PAN2 subfamily. In terms of assembly, forms a heterotrimer with an asymmetric homodimer of the regulatory subunit PAN3 to form the poly(A)-nuclease (PAN) deadenylation complex. A divalent metal cation is required as a cofactor.

The protein resides in the cytoplasm. The catalysed reaction is Exonucleolytic cleavage of poly(A) to 5'-AMP.. Positively regulated by the regulatory subunit PAN3. Functionally, catalytic subunit of the poly(A)-nuclease (PAN) deadenylation complex, one of two cytoplasmic mRNA deadenylases involved in mRNA turnover. PAN specifically shortens poly(A) tails of RNA and the activity is stimulated by poly(A)-binding protein PAB1. PAN deadenylation is followed by rapid degradation of the shortened mRNA tails by the CCR4-NOT complex. Deadenylated mRNAs are then degraded by two alternative mechanisms, namely exosome-mediated 3'-5' exonucleolytic degradation, or deadenylation-dependent mRNA decaping and subsequent 5'-3' exonucleolytic degradation by XRN1. May also be involved in post-transcriptional maturation of mRNA poly(A) tails. This Cryptococcus neoformans var. neoformans serotype D (strain B-3501A) (Filobasidiella neoformans) protein is PAN2-PAN3 deadenylation complex catalytic subunit PAN2.